The primary structure comprises 509 residues: Maturase K (509 aa).

The protein belongs to the intron maturase 2 family. MatK subfamily.

The protein localises to the plastid. The protein resides in the chloroplast. Functionally, usually encoded in the trnK tRNA gene intron. Probably assists in splicing its own and other chloroplast group II introns. The sequence is that of Maturase K from Nicotiana rustica (Aztec tobacco).